Reading from the N-terminus, the 390-residue chain is S-adenosylmethionine synthase 1 (390 aa).

Glu9 serves as a coordination point for Mg(2+). His15 provides a ligand contact to ATP. Glu43 is a K(+) binding site. L-methionine contacts are provided by Glu56 and Gln99. ATP contacts are provided by residues 167–169 (DGK), 235–238 (SGRF), Asp246, 252–253 (RK), Ala269, Lys273, and Lys277. An L-methionine-binding site is contributed by Asp246. Residue Lys277 coordinates L-methionine.

It belongs to the AdoMet synthase family. In terms of assembly, homotetramer. Mn(2+) serves as cofactor. It depends on Mg(2+) as a cofactor. The cofactor is Co(2+). Requires K(+) as cofactor.

Its subcellular location is the cytoplasm. The enzyme catalyses L-methionine + ATP + H2O = S-adenosyl-L-methionine + phosphate + diphosphate. It participates in amino-acid biosynthesis; S-adenosyl-L-methionine biosynthesis; S-adenosyl-L-methionine from L-methionine: step 1/1. Its function is as follows. Catalyzes the formation of S-adenosylmethionine from methionine and ATP. The reaction comprises two steps that are both catalyzed by the same enzyme: formation of S-adenosylmethionine (AdoMet) and triphosphate, and subsequent hydrolysis of the triphosphate. In Actinidia chinensis var. chinensis (Chinese soft-hair kiwi), this protein is S-adenosylmethionine synthase 1 (SAM1).